We begin with the raw amino-acid sequence, 205 residues long: Small ribosomal subunit protein uS4 (205 aa).

The tract at residues tryptophan 20–aspartate 47 is disordered. Residues cysteine 94–leucine 154 form the S4 RNA-binding domain.

The protein belongs to the universal ribosomal protein uS4 family. Part of the 30S ribosomal subunit. Contacts protein S5. The interaction surface between S4 and S5 is involved in control of translational fidelity.

Its function is as follows. One of the primary rRNA binding proteins, it binds directly to 16S rRNA where it nucleates assembly of the body of the 30S subunit. With S5 and S12 plays an important role in translational accuracy. This is Small ribosomal subunit protein uS4 from Paramagnetospirillum magneticum (strain ATCC 700264 / AMB-1) (Magnetospirillum magneticum).